The following is a 436-amino-acid chain: MTDIFEVPTPDNELLEKAKQLRLASIKTSQTNNDDRIRALNLMADYLEKNSKEIIEANIEDYKKAEIKGISKSLLSRLKLSKEKLNLGIEGVRQVGNLIDPVGQIQIKRELSKGLILERKTVPIGVLGVIFESRPDAVMQISSLAIRSGNGVMLKGGSEANLTNLAIVSALKEGLQDSNLDENAICLLTSRKDSMAMLNLEKYINLIIPRGSNELVKFIQENTEIPVLGHADGICHLYIDNEVNLDMALKVALDSKIQYPAACNAVETLLIHKDTASEFLNKAIPMFNSNDVKLIGDKKSFQLGVAFEANYEDWQTEYLDLILSIKIVNDLEEAIAHIQKFSSKHTDGIITENINNANKFMSEIDSSGVFHNCSTRFADGFRYGFGAEVGISTQTLPPRGPVGLEGLVTYKYFLRGEGHIVDDFSSGKLIYSHKDV.

The protein belongs to the gamma-glutamyl phosphate reductase family.

The protein localises to the cytoplasm. It carries out the reaction L-glutamate 5-semialdehyde + phosphate + NADP(+) = L-glutamyl 5-phosphate + NADPH + H(+). The protein operates within amino-acid biosynthesis; L-proline biosynthesis; L-glutamate 5-semialdehyde from L-glutamate: step 2/2. Functionally, catalyzes the NADPH-dependent reduction of L-glutamate 5-phosphate into L-glutamate 5-semialdehyde and phosphate. The product spontaneously undergoes cyclization to form 1-pyrroline-5-carboxylate. This is Gamma-glutamyl phosphate reductase from Prochlorococcus marinus subsp. pastoris (strain CCMP1986 / NIES-2087 / MED4).